The following is a 585-amino-acid chain: MPVLSEDSGLHETLALLTSQLRPDSNHREEMGFLRDVFSEKSLGYLMKIHEKLRYYERQSPTPVLHSAMALAEDVMEELQAASVHSDERELLQLLSTPHLRAVLMVHDTVAQKNFDPVLPPLPDNIDEDFEEESVKIVRLVKNKEPLGATIRRDEHSGAVVVARIMRGGAADRSGLVHVGDELREVNGITVLHKRPDEISQILAQSQGSITLKIIPATQEEDRFKESKVFMRALFHYDPREDRAIPCQEAGLPFQQRQVLEVVSQDDPTWWQAKRVGDTNLRAGLIPSKQFQERRLSYRRTTGTIPSPQNLRKPLYDQPCDKETCDCDGYFKGHYVAGLRRSFRLGCRERLTGSQEVKVPVGAESQVLLTYEEVARYQHQPGERSRLVVLIGSLGAHLHELKQRVVAEDPQHFGVAVPHTTRPRKSHEREGVEYHFVSKQAFEADIQHNKFLEHGEHKENLYGTSLEAIQTVMAKNKVCLVDVEPEALRHLRTPEFKPYVIFVKPAIQEKRKTPPVSPDSEDPATPLDEQQQEMAASAAFIDQHYGHLIDTVLVRQDLQSVCSQLRAVIESLSKDTYWVPISWVR.

L27 domains lie at 6–60 and 61–118; these read EDSG…ERQS and PTPV…FDPV. Residues 137 to 218 enclose the PDZ domain; sequence IVRLVKNKEP…SITLKIIPAT (82 aa). The region spanning 226–296 is the SH3 domain; that stretch reads ESKVFMRALF…PSKQFQERRL (71 aa). Position 307 is a phosphoserine (serine 307). Residues 385 to 570 form the Guanylate kinase-like domain; that stretch reads SRLVVLIGSL…VCSQLRAVIE (186 aa). Positions 510–530 are disordered; sequence KRKTPPVSPDSEDPATPLDEQ.

This sequence belongs to the MAGUK family. Interacts with HTR2C; this interaction stabilizes the receptor at the plasma membrane and prevents the desensitization of the HTR2C receptor-mediated calcium response. Interacts with HTR2A. Interacts with HTR4. Interacts (via PDZ domain) with CADM1 (via C-terminus)Interacts (via PDZ domain) with CADM1; this interaction connects CADM1 with DLG1. Interacts (via Guanylate kinase-like domain) with PALS1. Interacts with DLG1 (via N-terminus); this interaction connects CADM1 with DLG1 and links CADM1 with the regulatory subunit of phosphoinositide-3-kinase (PI3K) by forming a multiprotein complex and participates in cell spreading.

The protein resides in the apical cell membrane. Its subcellular location is the cell membrane. The protein localises to the cell junction. It is found in the adherens junction. Participates in cell spreading through the phosphoinositide-3-kinase (PI3K) pathway by connecting CADM1 to DLG1 and the regulatory subunit of phosphoinositide-3-kinase (PI3K). Stabilizes HTR2C at the plasma membrane and prevents its desensitization. May participates in the maintenance of adherens junctions. The chain is MAGUK p55 subfamily member 3 from Rattus norvegicus (Rat).